A 64-amino-acid chain; its full sequence is UPF0434 protein TERTU_2813 (64 aa).

The protein belongs to the UPF0434 family.

The protein is UPF0434 protein TERTU_2813 of Teredinibacter turnerae (strain ATCC 39867 / T7901).